A 540-amino-acid chain; its full sequence is 2,3-bisphosphoglycerate-independent phosphoglycerate mutase (540 aa).

The Mn(2+) site is built by D25 and S75. Residue S75 is the Phosphoserine intermediate of the active site. Residues H136, 166-167 (RD), R198, R204, 269-272 (RPDR), and K342 each bind substrate. Mn(2+)-binding residues include D409, H413, D450, H451, and H468.

It belongs to the BPG-independent phosphoglycerate mutase family. As to quaternary structure, monomer. It depends on Mn(2+) as a cofactor.

The catalysed reaction is (2R)-2-phosphoglycerate = (2R)-3-phosphoglycerate. It participates in carbohydrate degradation; glycolysis; pyruvate from D-glyceraldehyde 3-phosphate: step 3/5. Catalyzes the interconversion of 2-phosphoglycerate and 3-phosphoglycerate. This Prochlorococcus marinus subsp. pastoris (strain CCMP1986 / NIES-2087 / MED4) protein is 2,3-bisphosphoglycerate-independent phosphoglycerate mutase.